The chain runs to 501 residues: Ribose import ATP-binding protein RbsA (501 aa).

2 ABC transporter domains span residues 5–241 (LQLK…VGRK) and 252–495 (APGD…VGKL). ATP is bound at residue 37 to 44 (GENGAGKS).

The protein belongs to the ABC transporter superfamily. Ribose importer (TC 3.A.1.2.1) family. As to quaternary structure, the complex is composed of an ATP-binding protein (RbsA), two transmembrane proteins (RbsC) and a solute-binding protein (RbsB).

Its subcellular location is the cell inner membrane. The enzyme catalyses D-ribose(out) + ATP + H2O = D-ribose(in) + ADP + phosphate + H(+). In terms of biological role, part of the ABC transporter complex RbsABC involved in ribose import. Responsible for energy coupling to the transport system. This Escherichia coli (strain K12) protein is Ribose import ATP-binding protein RbsA.